Here is a 46-residue protein sequence, read N- to C-terminus: Large ribosomal subunit protein bL34 (46 aa).

The span at 1 to 17 (MTKRTLRGSVRKKKRTS) shows a compositional bias: basic residues. A disordered region spans residues 1–26 (MTKRTLRGSVRKKKRTSGFRARMETP).

It belongs to the bacterial ribosomal protein bL34 family.

This Pseudanabaena sp. (strain PCC 6903) protein is Large ribosomal subunit protein bL34 (rpmH).